A 702-amino-acid chain; its full sequence is DnaJ homolog subfamily C member 14 (702 aa).

2 disordered regions span residues 1 to 148 (MAQK…GGNG) and 165 to 229 (DELE…KRSQ). Positions 75–84 (HGPPGGPGPP) are enriched in pro residues. Residues 88 to 103 (EDPDQSETSSEEESGV) show a composition bias toward acidic residues. Residues 113 to 133 (TGNQKDGNSFLSIPSACNCQG) show a composition bias toward polar residues. Residues 165 to 175 (DELEEEYDDEE) show a composition bias toward acidic residues. Residues 192–201 (PPSRRQRHRF) show a composition bias toward basic residues. Residues 202-217 (PTKEDTREGGRRDPRS) are compositionally biased toward basic and acidic residues. Positions 218–227 (PGRHRLGRKR) are enriched in basic residues. The next 3 helical transmembrane spans lie at 250-270 (AGFW…ETCG), 300-320 (GWAQ…VGLF), and 326-346 (LLGA…QLGW). The J domain maps to 443 to 507 (NPFHVLGVEA…EKRKEYEMKR (65 aa)). Residues 658 to 702 (MPNGNFFAAPQPAPGAAAASKPNSTVPKGEAKPKRRKKVRRPFQR) form a disordered region. Residues 659-676 (PNGNFFAAPQPAPGAAAA) show a composition bias toward low complexity. Residues 690–702 (PKRRKKVRRPFQR) show a composition bias toward basic residues.

As to quaternary structure, interacts with the FxxxFxxxF motif of DRD1 via its C-terminal domain. In terms of tissue distribution, highly expressed in pancreas and selectively expressed in brain, lung, liver, skeletal muscle and kidney.

The protein localises to the endoplasmic reticulum membrane. Its function is as follows. Regulates the export of target proteins, such as DRD1, from the endoplasmic reticulum to the cell surface. The chain is DnaJ homolog subfamily C member 14 (DNAJC14) from Homo sapiens (Human).